A 484-amino-acid chain; its full sequence is Endoglucanase 9 (484 aa).

The N-terminal stretch at 1 to 21 (MTSLFFFVLLFSSLLISNGDA) is a signal peptide. The active-site Nucleophile is the aspartate 77. Catalysis depends on residues histidine 402, aspartate 453, and glutamate 462.

This sequence belongs to the glycosyl hydrolase 9 (cellulase E) family. In terms of tissue distribution, specifically expressed in root cap cells.

The protein localises to the secreted. It is found in the cell wall. The catalysed reaction is Endohydrolysis of (1-&gt;4)-beta-D-glucosidic linkages in cellulose, lichenin and cereal beta-D-glucans.. The protein is Endoglucanase 9 (CEL3) of Arabidopsis thaliana (Mouse-ear cress).